Reading from the N-terminus, the 215-residue chain is Uracil phosphoribosyltransferase (215 aa).

A GTP-binding site is contributed by 30–34; the sequence is KGMVR. 5-phospho-alpha-D-ribose 1-diphosphate contacts are provided by residues Arg80, Arg105, and 139–147; that span reads DPMIATAST. Residues Ile202 and 207–209 contribute to the uracil site; that span reads GDA. Asp208 is a binding site for 5-phospho-alpha-D-ribose 1-diphosphate.

Belongs to the UPRTase family. Mg(2+) is required as a cofactor.

It catalyses the reaction UMP + diphosphate = 5-phospho-alpha-D-ribose 1-diphosphate + uracil. It functions in the pathway pyrimidine metabolism; UMP biosynthesis via salvage pathway; UMP from uracil: step 1/1. With respect to regulation, allosterically activated by GTP. Catalyzes the conversion of uracil and 5-phospho-alpha-D-ribose 1-diphosphate (PRPP) to UMP and diphosphate. In Metallosphaera sedula (strain ATCC 51363 / DSM 5348 / JCM 9185 / NBRC 15509 / TH2), this protein is Uracil phosphoribosyltransferase.